Consider the following 272-residue polypeptide: Hemin import ATP-binding protein HmuV (272 aa).

Positions 2–255 (LNADHLHVAR…EPIARCYGFR (254 aa)) constitute an ABC transporter domain. 34-41 (GRNGAGKS) provides a ligand contact to ATP.

Belongs to the ABC transporter superfamily. Heme (hemin) importer (TC 3.A.1.14.5) family. The complex is composed of two ATP-binding proteins (HmuV), two transmembrane proteins (HmuU) and a solute-binding protein (HmuT).

It is found in the cell inner membrane. Its function is as follows. Part of the ABC transporter complex HmuTUV involved in hemin import. Responsible for energy coupling to the transport system. In Burkholderia pseudomallei (strain 1710b), this protein is Hemin import ATP-binding protein HmuV.